A 514-amino-acid chain; its full sequence is Histidine ammonia-lyase (514 aa).

Positions 143 to 145 (ASG) form a cross-link, 5-imidazolinone (Ala-Gly). 2,3-didehydroalanine (Ser) is present on S144.

Belongs to the PAL/histidase family. Post-translationally, contains an active site 4-methylidene-imidazol-5-one (MIO), which is formed autocatalytically by cyclization and dehydration of residues Ala-Ser-Gly.

Its subcellular location is the cytoplasm. The enzyme catalyses L-histidine = trans-urocanate + NH4(+). It functions in the pathway amino-acid degradation; L-histidine degradation into L-glutamate; N-formimidoyl-L-glutamate from L-histidine: step 1/3. This Photorhabdus laumondii subsp. laumondii (strain DSM 15139 / CIP 105565 / TT01) (Photorhabdus luminescens subsp. laumondii) protein is Histidine ammonia-lyase.